Consider the following 524-residue polypeptide: Leucine-rich repeat-containing protein 1 (524 aa).

LRR repeat units lie at residues 11 to 34, 35 to 58, 60 to 81, 83 to 105, 107 to 126, 127 to 149, 150 to 172, 173 to 196, 198 to 218, 219 to 242, 244 to 264, 265 to 288, 290 to 310, 311 to 334, 336 to 356, 357 to 380, and 382 to 405; these read NRHV…IYRY, ARSL…FFQL, KLRK…IANF, QLVE…SFCK, LQVA…SFPE, LQNL…NIGN, LYNL…SLTQ, LRRL…IGAL, HLKD…EIGN, LKNL…ISGL, SLTD…GIGK, LKKL…VGEC, SLTE…SIGK, LKKL…IGGC, SLTV…EVSQ, ATEL…LTAL, and LKAL…TDYT. At Thr-480 the chain carries Phosphothreonine. Positions 484-512 form a coiled coil; the sequence is GELKHMKKTVENLRNDMNAAKGLDSNKNE.

As to quaternary structure, interacts with DLG1 and DLG4. May form a complex with DLG1 and ERBIN, where interaction between LRRC1 and ERBIN is indirect. Expressed strongly in testis and placenta, followed by heart, lung, kidney, thyroid, trachea, colon, prostate and pancreas.

Its subcellular location is the cytoplasm. It localises to the membrane. The polypeptide is Leucine-rich repeat-containing protein 1 (LRRC1) (Homo sapiens (Human)).